A 188-amino-acid chain; its full sequence is RWD domain-containing protein 4 (188 aa).

One can recognise an RWD domain in the interval 9 to 111 (MELEALRSIY…EYAKDNKEQF (103 aa)). Residues 132-167 (TPSAAPSSKKKDKKEQLSKAQKRKLADKTDHKGELP) form a disordered region. Basic and acidic residues predominate over residues 155–166 (KLADKTDHKGEL).

The chain is RWD domain-containing protein 4 (Rwdd4) from Rattus norvegicus (Rat).